Reading from the N-terminus, the 504-residue chain is Maturase K (504 aa).

It belongs to the intron maturase 2 family. MatK subfamily.

It localises to the plastid. It is found in the chloroplast. Its function is as follows. Usually encoded in the trnK tRNA gene intron. Probably assists in splicing its own and other chloroplast group II introns. This is Maturase K from Lobularia maritima (Sweet alyssum).